A 225-amino-acid chain; its full sequence is MNLTINALTRNYQGKGANRRLRRNNKIPAIVYGTGKPPSKITLDIFEITHLLKNEETYTSVLNLIVNKNKEAVIIKNLQRHPAKNSITHIDFLRINLNQSIITSIPIQFNGEEDNKAMRLGAVLNQFMTAIEISCLPTNLPHSINVDISHLTIGEHINLTDINIPKGIVITALTHGDIETHNQSIAIIQEPRKMAEIEENILVKAEDSKNKITKDNETNKDKSNL.

Residues Glu-206–Leu-225 are disordered.

Belongs to the bacterial ribosomal protein bL25 family. CTC subfamily. As to quaternary structure, part of the 50S ribosomal subunit; part of the 5S rRNA/L5/L18/L25 subcomplex. Contacts the 5S rRNA. Binds to the 5S rRNA independently of L5 and L18.

Functionally, this is one of the proteins that binds to the 5S RNA in the ribosome where it forms part of the central protuberance. In Vesicomyosocius okutanii subsp. Calyptogena okutanii (strain HA), this protein is Large ribosomal subunit protein bL25.